The following is a 360-amino-acid chain: Ubiquitin carboxyl-terminal hydrolase MIY1 (360 aa).

Catalysis depends on Cys28, which acts as the Nucleophile. His216 serves as the catalytic Proton acceptor. Positions 317–360 (KRKIHSHKKNSEIHAPVKKDKFKRRSSLLNAKASEKEKSECVVM) are disordered. Composition is skewed to basic and acidic residues over residues 325 to 335 (KNSEIHAPVKK) and 349 to 360 (ASEKEKSECVVM).

The protein belongs to the MINDY deubiquitinase family. FAM63 subfamily.

It localises to the cytoplasm. The enzyme catalyses Thiol-dependent hydrolysis of ester, thioester, amide, peptide and isopeptide bonds formed by the C-terminal Gly of ubiquitin (a 76-residue protein attached to proteins as an intracellular targeting signal).. Hydrolase that can specifically remove 'Lys-48'-linked conjugated ubiquitin from proteins. Has endodeubiquitinase activity. This chain is Ubiquitin carboxyl-terminal hydrolase MIY1, found in Saccharomyces cerevisiae (strain ATCC 204508 / S288c) (Baker's yeast).